Reading from the N-terminus, the 224-residue chain is Tumor protein D52 (224 aa).

A phosphoserine mark is found at Ser-36 and Ser-40. The stretch at 62 to 114 (AATISATETLSEEEQEELRRELAKVEEEIQTLSQVLAAKEKHLAEIKRKLGIN) forms a coiled coil. Ser-176 is modified (phosphoserine). Positions 187–224 (KVGGTKPAGGDFGEVLNSAANASATTTEPLPEKTQESL) are disordered. The span at 203–213 (NSAANASATTT) shows a compositional bias: low complexity. Phosphoserine is present on Ser-223.

Belongs to the TPD52 family. In terms of assembly, forms a homodimer or heterodimer with other members of the family. All isoforms interact with several 14-3-3 proteins. In terms of tissue distribution, isoform 2 is expressed in colon, breast, prostate, pancreas and kidney tumor cell lines. Isoform 2 is expressed at high levels in kidney, prostate, brain, small intestine and pancreas, at moderate levels in placenta and colon, at low levels in lung, liver and heart, and at very low levels in spleen, thymus, peripheral mononuclear blood cells, testis and ovary.

The sequence is that of Tumor protein D52 (TPD52) from Homo sapiens (Human).